The sequence spans 289 residues: 4-hydroxy-tetrahydrodipicolinate synthase (289 aa).

Pyruvate is bound at residue T42. The active-site Proton donor/acceptor is the Y129. K157 serves as the catalytic Schiff-base intermediate with substrate. A pyruvate-binding site is contributed by I198.

Belongs to the DapA family. In terms of assembly, homotetramer; dimer of dimers.

The protein localises to the cytoplasm. The enzyme catalyses L-aspartate 4-semialdehyde + pyruvate = (2S,4S)-4-hydroxy-2,3,4,5-tetrahydrodipicolinate + H2O + H(+). The protein operates within amino-acid biosynthesis; L-lysine biosynthesis via DAP pathway; (S)-tetrahydrodipicolinate from L-aspartate: step 3/4. Functionally, catalyzes the condensation of (S)-aspartate-beta-semialdehyde [(S)-ASA] and pyruvate to 4-hydroxy-tetrahydrodipicolinate (HTPA). This chain is 4-hydroxy-tetrahydrodipicolinate synthase, found in Chlamydia caviae (strain ATCC VR-813 / DSM 19441 / 03DC25 / GPIC) (Chlamydophila caviae).